We begin with the raw amino-acid sequence, 264 residues long: Neuferricin (264 aa).

The signal sequence occupies residues 1–22 (MLRCGGRGLLLGLAVAAAAVMA). Residues 35–134 (FRLFIPEELS…KNYVCVGRVT (100 aa)) enclose the Cytochrome b5 heme-binding domain.

Belongs to the cytochrome b5 family. MAPR subfamily.

Its subcellular location is the secreted. Heme-binding protein which promotes neuronal but not astrocyte differentiation. This Homo sapiens (Human) protein is Neuferricin.